Reading from the N-terminus, the 208-residue chain is Urease accessory protein UreG (208 aa).

Residue 10-17 coordinates GTP; the sequence is GPVGSGKT.

Belongs to the SIMIBI class G3E GTPase family. UreG subfamily. As to quaternary structure, homodimer. UreD, UreF and UreG form a complex that acts as a GTP-hydrolysis-dependent molecular chaperone, activating the urease apoprotein by helping to assemble the nickel containing metallocenter of UreC. The UreE protein probably delivers the nickel.

It is found in the cytoplasm. Functionally, facilitates the functional incorporation of the urease nickel metallocenter. This process requires GTP hydrolysis, probably effectuated by UreG. This Halalkalibacterium halodurans (strain ATCC BAA-125 / DSM 18197 / FERM 7344 / JCM 9153 / C-125) (Bacillus halodurans) protein is Urease accessory protein UreG.